The primary structure comprises 134 residues: D-xylulose reductase (134 aa).

The segment at 31–115 (PATTTXYKXQ…XXQXDKIGRY (85 aa)) is disordered. Over residues 50–59 (QTHEGTHQDV) the composition is skewed to basic and acidic residues.

The protein belongs to the zinc-containing alcohol dehydrogenase family.

It carries out the reaction xylitol + NAD(+) = D-xylulose + NADH + H(+). With respect to regulation, activated by calcium and inhibited by zinc. This is D-xylulose reductase from Sus scrofa (Pig).